Consider the following 162-residue polypeptide: NADH-quinone oxidoreductase subunit I (162 aa).

2 consecutive 4Fe-4S ferredoxin-type domains span residues 53–83 and 93–122; these read LRRY…IESE and TRYD…ETHI. Cys-63, Cys-66, Cys-69, Cys-73, Cys-102, Cys-105, Cys-108, and Cys-112 together coordinate [4Fe-4S] cluster.

Belongs to the complex I 23 kDa subunit family. In terms of assembly, NDH-1 is composed of 14 different subunits. Subunits NuoA, H, J, K, L, M, N constitute the membrane sector of the complex. Requires [4Fe-4S] cluster as cofactor.

The protein resides in the cell inner membrane. The catalysed reaction is a quinone + NADH + 5 H(+)(in) = a quinol + NAD(+) + 4 H(+)(out). Its function is as follows. NDH-1 shuttles electrons from NADH, via FMN and iron-sulfur (Fe-S) centers, to quinones in the respiratory chain. The immediate electron acceptor for the enzyme in this species is believed to be ubiquinone. Couples the redox reaction to proton translocation (for every two electrons transferred, four hydrogen ions are translocated across the cytoplasmic membrane), and thus conserves the redox energy in a proton gradient. In Herminiimonas arsenicoxydans, this protein is NADH-quinone oxidoreductase subunit I.